The following is a 259-amino-acid chain: 4-hydroxy-tetrahydrodipicolinate reductase (259 aa).

NAD(+) is bound by residues 8-13, 94-96, and 120-123; these read GFAGAM, GTT, and APNF. His150 acts as the Proton donor/acceptor in catalysis. A (S)-2,3,4,5-tetrahydrodipicolinate-binding site is contributed by His151. Lys154 (proton donor) is an active-site residue. 160 to 161 contacts (S)-2,3,4,5-tetrahydrodipicolinate; that stretch reads GT.

This sequence belongs to the DapB family.

The protein localises to the cytoplasm. It carries out the reaction (S)-2,3,4,5-tetrahydrodipicolinate + NAD(+) + H2O = (2S,4S)-4-hydroxy-2,3,4,5-tetrahydrodipicolinate + NADH + H(+). The catalysed reaction is (S)-2,3,4,5-tetrahydrodipicolinate + NADP(+) + H2O = (2S,4S)-4-hydroxy-2,3,4,5-tetrahydrodipicolinate + NADPH + H(+). The protein operates within amino-acid biosynthesis; L-lysine biosynthesis via DAP pathway; (S)-tetrahydrodipicolinate from L-aspartate: step 4/4. In terms of biological role, catalyzes the conversion of 4-hydroxy-tetrahydrodipicolinate (HTPA) to tetrahydrodipicolinate. This chain is 4-hydroxy-tetrahydrodipicolinate reductase, found in Limosilactobacillus fermentum (strain NBRC 3956 / LMG 18251) (Lactobacillus fermentum).